The following is a 351-amino-acid chain: S-adenosylmethionine:tRNA ribosyltransferase-isomerase (351 aa).

This sequence belongs to the QueA family. Monomer.

The protein resides in the cytoplasm. The catalysed reaction is 7-aminomethyl-7-carbaguanosine(34) in tRNA + S-adenosyl-L-methionine = epoxyqueuosine(34) in tRNA + adenine + L-methionine + 2 H(+). Its pathway is tRNA modification; tRNA-queuosine biosynthesis. Functionally, transfers and isomerizes the ribose moiety from AdoMet to the 7-aminomethyl group of 7-deazaguanine (preQ1-tRNA) to give epoxyqueuosine (oQ-tRNA). In Hydrogenovibrio crunogenus (strain DSM 25203 / XCL-2) (Thiomicrospira crunogena), this protein is S-adenosylmethionine:tRNA ribosyltransferase-isomerase.